Here is a 162-residue protein sequence, read N- to C-terminus: Globin CTT-VIIB-7 (162 aa).

The signal sequence occupies residues 1–16 (MKFFAVLALCVVGAIA). In terms of domain architecture, Globin spans 18–162 (PLSADEANLV…TYAVALKSLE (145 aa)). H76 and H111 together coordinate heme b.

It belongs to the globin family. As to quaternary structure, homodimer.

In Chironomus thummi piger (Midge), this protein is Globin CTT-VIIB-7 (CTT-7B7).